Here is a 622-residue protein sequence, read N- to C-terminus: Low affinity potassium transport system protein Kup (622 aa).

The next 12 helical transmembrane spans lie at 9 to 29 (LPAITLAAIGVVYGDIGTSPL), 49 to 69 (VFGFLSLIFWLLIFVVSIKYL), 103 to 123 (VIMGLIGGSFFYGEVVITPAI), 137 to 157 (PQLDTWIVPLSIIVLTLLFMI), 165 to 185 (VGKLFAPIMLTWFLILAGLGL), 213 to 233 (VSFIALGAVVLSITGGEALYA), 247 to 267 (WFTVVLPSLTLNYFGQGALLL), 276 to 296 (PFFLLAPDWALIPLLIIAALA), 337 to 357 (IYIPFVNWMLYVAVVIVIVSF), 363 to 383 (LAAAYGIAVTGTMVLTSILST), 396 to 416 (FVALILIAFLCVDIPLFTANL), and 419 to 439 (LLSGGWLPLSLGTVMFIVMTT).

The protein belongs to the HAK/KUP transporter (TC 2.A.72) family.

It localises to the cell inner membrane. It carries out the reaction K(+)(in) + H(+)(in) = K(+)(out) + H(+)(out). In terms of biological role, responsible for the low-affinity transport of potassium into the cell. Likely operates as a K(+):H(+) symporter. The protein is Low affinity potassium transport system protein Kup of Shigella flexneri serotype 5b (strain 8401).